The chain runs to 428 residues: Probable mannosyltransferase YUR1 (428 aa).

Topologically, residues 1-3 (MAK) are cytoplasmic. A helical; Signal-anchor for type II membrane protein transmembrane segment spans residues 4–24 (GGSLYIVGIFLPIWTFMIYIF). Residues 25-88 (GKELFLIRKY…TRQNDSDSFH (64 aa)) are stem region. Residues 25-428 (GKELFLIRKY…YFLKEEQDEI (404 aa)) are Lumenal-facing. Residues N77, N82, N92, and N167 are each glycosylated (N-linked (GlcNAc...) asparagine). Positions 89 to 428 (LRENATILML…YFLKEEQDEI (340 aa)) are catalytic. The Nucleophile role is filled by E313. N414 is a glycosylation site (N-linked (GlcNAc...) asparagine).

The protein belongs to the glycosyltransferase 15 family.

The protein resides in the golgi apparatus membrane. It participates in protein modification; protein glycosylation. Possible glycosyltransferase involved in N-linked glycosylation. Transfers an alpha-D-mannosyl residue from GDP-mannose into lipid-linked oligosaccharide, forming an alpha-(1-&gt;2)-D-mannosyl-D-mannose linkage. This Saccharomyces cerevisiae (strain ATCC 204508 / S288c) (Baker's yeast) protein is Probable mannosyltransferase YUR1 (YUR1).